Here is a 424-residue protein sequence, read N- to C-terminus: Dihydrolipoyllysine-residue succinyltransferase component of 2-oxoglutarate dehydrogenase complex (424 aa).

One can recognise a Lipoyl-binding domain in the interval 1–76 (MPEVKVPELA…EVGQAIAVVG (76 aa)). Lys-42 is modified (N6-lipoyllysine). Disordered regions lie at residues 76–138 (GEGS…KYAR) and 155–204 (VRKE…RKKT). The segment covering 91 to 105 (EAPKQETETSTDDKS) has biased composition (basic and acidic residues). The segment covering 122 to 131 (DNNQRVNATP) has biased composition (polar residues). A Peripheral subunit-binding (PSBD) domain is found at 128 to 164 (NATPSARKYAREKGIDLSEIAAASNDVVRKEHVDQSQ). Positions 162–176 (QSQTQTSTQQQAQPA) are enriched in low complexity. Catalysis depends on residues His-395 and Asp-399.

Belongs to the 2-oxoacid dehydrogenase family. As to quaternary structure, forms a 24-polypeptide structural core with octahedral symmetry. Part of the 2-oxoglutarate dehydrogenase (OGDH) complex composed of E1 (2-oxoglutarate dehydrogenase), E2 (dihydrolipoamide succinyltransferase) and E3 (dihydrolipoamide dehydrogenase); the complex contains multiple copies of the three enzymatic components (E1, E2 and E3). The cofactor is (R)-lipoate.

The enzyme catalyses N(6)-[(R)-dihydrolipoyl]-L-lysyl-[protein] + succinyl-CoA = N(6)-[(R)-S(8)-succinyldihydrolipoyl]-L-lysyl-[protein] + CoA. It participates in amino-acid degradation; L-lysine degradation via saccharopine pathway; glutaryl-CoA from L-lysine: step 6/6. In terms of biological role, E2 component of the 2-oxoglutarate dehydrogenase (OGDH) complex which catalyzes the second step in the conversion of 2-oxoglutarate to succinyl-CoA and CO(2). This chain is Dihydrolipoyllysine-residue succinyltransferase component of 2-oxoglutarate dehydrogenase complex (odhB), found in Staphylococcus saprophyticus subsp. saprophyticus (strain ATCC 15305 / DSM 20229 / NCIMB 8711 / NCTC 7292 / S-41).